The following is a 163-amino-acid chain: Protein GOLVEN 3 (163 aa).

The N-terminal stretch at 1-20 (MMRFTIIVIAFLLIIQSLEE) is a signal peptide. Positions 21–141 (EHILVYAHEG…MEKLARLLRD (121 aa)) are excised as a propeptide. Tyr-143 is modified (sulfotyrosine). Positions 144–163 (PIYSKPRRKPPVNNRAPDKF) are disordered. The residue at position 154 (Pro-154) is a Hydroxyproline. A propeptide spanning residues 158 to 163 (RAPDKF) is cleaved from the precursor.

This sequence belongs to the RGF family. In terms of assembly, binds to LRR receptor-like serine/threonine-protein kinases RGI1, RGI2 and RGI3 to trigger their dimerization with SERK proteins and subsequent signaling. As to expression, expressed in roots, specifically in the root apical meristem (RAM).

The protein localises to the secreted. Signaling peptide (root growth factor) required during root gravitropism in a PIN2-traffic dependent manner, thus influencing the formation of auxin gradients. Maintains the postembryonic root stem cell niche. The protein is Protein GOLVEN 3 of Arabidopsis thaliana (Mouse-ear cress).